A 367-amino-acid polypeptide reads, in one-letter code: Glutamate 5-kinase (367 aa).

ATP is bound at residue lysine 10. The substrate site is built by serine 50, aspartate 137, and asparagine 149. ATP-binding positions include 169–170 and 211–217; these read TD and TGGMSTK. In terms of domain architecture, PUA spans 275-353; the sequence is AGEITVDDGA…QQIAEILGYE (79 aa).

It belongs to the glutamate 5-kinase family.

The protein resides in the cytoplasm. It carries out the reaction L-glutamate + ATP = L-glutamyl 5-phosphate + ADP. It participates in amino-acid biosynthesis; L-proline biosynthesis; L-glutamate 5-semialdehyde from L-glutamate: step 1/2. Catalyzes the transfer of a phosphate group to glutamate to form L-glutamate 5-phosphate. The polypeptide is Glutamate 5-kinase (Pectobacterium atrosepticum (strain SCRI 1043 / ATCC BAA-672) (Erwinia carotovora subsp. atroseptica)).